A 438-amino-acid chain; its full sequence is Glucose-6-phosphate isomerase (438 aa).

The active-site Proton donor is Glu-289. Catalysis depends on residues His-310 and Lys-424.

This sequence belongs to the GPI family.

It is found in the cytoplasm. The catalysed reaction is alpha-D-glucose 6-phosphate = beta-D-fructose 6-phosphate. It participates in carbohydrate biosynthesis; gluconeogenesis. The protein operates within carbohydrate degradation; glycolysis; D-glyceraldehyde 3-phosphate and glycerone phosphate from D-glucose: step 2/4. Functionally, catalyzes the reversible isomerization of glucose-6-phosphate to fructose-6-phosphate. This is Glucose-6-phosphate isomerase from Oenococcus oeni (strain ATCC BAA-331 / PSU-1).